The following is a 335-amino-acid chain: Legumin type B (335 aa).

Disordered regions lie at residues 47–87 and 102–155; these read PETQ…GNSV and TEED…GRNG. A compositionally biased stretch (basic and acidic residues) spans 105–118; sequence DTAKRLRSPRDKRN. Acidic residues predominate over residues 135-144; the sequence is QQEEEEEEEE. The region spanning 167-314 is the Cupin type-1 domain; the sequence is ENIAQPARAD…AFGLRQRQVT (148 aa).

Belongs to the 11S seed storage protein (globulins) family. Hexamer; each subunit is composed of an acidic and a basic chain derived from a single precursor and linked by a disulfide bond.

This protein found in the seeds of many leguminous and non-leguminous plants is the source of sulfur-containing amino acids in seed meals. The chain is Legumin type B (LEB2) from Vicia faba (Broad bean).